A 114-amino-acid chain; its full sequence is Somatostatin-1A (114 aa).

Positions 1 to 24 (MLSTRIQCALALLSLALAVCSVSA) are cleaved as a signal peptide. Positions 25 to 88 (APTDAKLRQL…KDEVRLELER (64 aa)) are excised as a propeptide. The cysteines at positions 103 and 114 are disulfide-linked.

The protein belongs to the somatostatin family.

The protein localises to the secreted. Somatostatin inhibits the release of somatotropin. The chain is Somatostatin-1A (sst1a) from Carassius auratus (Goldfish).